The chain runs to 755 residues: Protein MTSS 1 (755 aa).

In terms of domain architecture, IMD spans 1-250 (MEAVIEKECS…EQVILDLKGS (250 aa)). Positions 108 to 155 (LQEQMEEWKKVANQLDKDHAKEYKKARQEIKKKSSDTLKLQKKAKKGR) form a coiled coil. Disordered regions lie at residues 139–159 (KKSS…GDIQ) and 255–305 (SYQT…RSSN). Thr-258 is modified (phosphothreonine). Phosphoserine is present on residues Ser-261, Ser-262, Ser-271, and Ser-322. The tract at residues 327–351 (QDAFQSKSPSPMPPEAPNQLSNGFS) is disordered. Position 425 is a phosphothreonine (Thr-425). 3 disordered regions span residues 428 to 470 (RRKE…TRPG), 490 to 513 (DTQR…TTPC), and 563 to 755 (QAKR…PRFS). Positions 443–453 (TTASGPPAAAE) are enriched in low complexity. Thr-603 is modified (phosphothreonine). Positions 608-623 (PIPIKTPVIPVKTPTV) are enriched in low complexity. Residues Ser-644 and Ser-647 each carry the phosphoserine modification. A compositionally biased stretch (polar residues) spans 656 to 671 (GVTSMPSSMWSGQASV). Residues 727–744 (QGEDMLNAIRRGVKLKKT) form the WH2 domain.

Belongs to the MTSS family. Binds to actin. Binds to the cytoplasmic domain of receptor protein tyrosine phosphatase delta. Expressed in many tissues, including spleen, thymus, prostate, testis, uterus, colon, and peripheral blood.

The protein resides in the cytoplasm. It localises to the cytoskeleton. Functionally, may be related to cancer progression or tumor metastasis in a variety of organ sites, most likely through an interaction with the actin cytoskeleton. The chain is Protein MTSS 1 from Homo sapiens (Human).